Consider the following 277-residue polypeptide: NAD kinase (277 aa).

The active-site Proton acceptor is aspartate 55. NAD(+) contacts are provided by residues 55 to 56, 131 to 132, arginine 157, aspartate 159, and 170 to 175; these read DG, NE, and TAYNKS.

The protein belongs to the NAD kinase family. The cofactor is a divalent metal cation.

The protein localises to the cytoplasm. It catalyses the reaction NAD(+) + ATP = ADP + NADP(+) + H(+). Involved in the regulation of the intracellular balance of NAD and NADP, and is a key enzyme in the biosynthesis of NADP. Catalyzes specifically the phosphorylation on 2'-hydroxyl of the adenosine moiety of NAD to yield NADP. This chain is NAD kinase, found in Streptococcus mutans serotype c (strain ATCC 700610 / UA159).